Reading from the N-terminus, the 125-residue chain is Small ribosomal subunit protein eS8 (125 aa).

The protein belongs to the eukaryotic ribosomal protein eS8 family. In terms of assembly, part of the 30S ribosomal subunit.

The protein is Small ribosomal subunit protein eS8 of Methanosarcina mazei (strain ATCC BAA-159 / DSM 3647 / Goe1 / Go1 / JCM 11833 / OCM 88) (Methanosarcina frisia).